Here is a 509-residue protein sequence, read N- to C-terminus: uncharacterized protein (509 aa).

Helical transmembrane passes span 14 to 34 (SAFTILFAILILAVGLTWVIP), 117 to 137 (TIEAVDVMVFIFVLGGMIGVI), 158 to 178 (EFFIVFCVSVLMVLGGTTCGI), 188 to 208 (ILVPVFLALGYDAIVCVGAIF), 209 to 229 (LAASMGTAFSTINPFSVVIAS), 240 to 260 (IGFRALGLVLGATCVIAYLYW), 303 to 323 (LILTLFCISFPIMIWGVMVGG), 324 to 344 (WWFPQMAASFLAITIIIMFIS), 359 to 379 (ASELVGVSLIIGLARGVNLVL), 399 to 419 (MPGSVFILGQLVVFIFLGLIV), 423 to 443 (SGLAVLSMPIMAPLADSVGIP), 458 to 478 (MLFLAPTGLVLVTLQMLQIPF), and 484 to 504 (FVMPMIGCLLLIGSILLVVQV).

It to E.coli YfcC. The protein to B.subtilis YcgA.

Its subcellular location is the cell membrane. This is an uncharacterized protein from Haemophilus influenzae (strain ATCC 51907 / DSM 11121 / KW20 / Rd).